The sequence spans 205 residues: Glycerol-3-phosphate acyltransferase (205 aa).

The next 5 helical transmembrane spans lie at 3–23 (VFAL…SAIL), 53–73 (GVAA…VWLA), 80–100 (PFYL…PVFF), 112–132 (LGAI…TWLL), and 138–158 (GYSS…VWWF).

The protein belongs to the PlsY family. In terms of assembly, probably interacts with PlsX.

It localises to the cell inner membrane. It catalyses the reaction an acyl phosphate + sn-glycerol 3-phosphate = a 1-acyl-sn-glycero-3-phosphate + phosphate. It functions in the pathway lipid metabolism; phospholipid metabolism. Catalyzes the transfer of an acyl group from acyl-phosphate (acyl-PO(4)) to glycerol-3-phosphate (G3P) to form lysophosphatidic acid (LPA). This enzyme utilizes acyl-phosphate as fatty acyl donor, but not acyl-CoA or acyl-ACP. The polypeptide is Glycerol-3-phosphate acyltransferase (Erwinia tasmaniensis (strain DSM 17950 / CFBP 7177 / CIP 109463 / NCPPB 4357 / Et1/99)).